The chain runs to 316 residues: Universal stress protein E (316 aa).

This sequence belongs to the universal stress protein A family.

It is found in the cytoplasm. Its function is as follows. Required for resistance to DNA-damaging agents. The protein is Universal stress protein E (uspE) of Escherichia coli O157:H7.